Here is a 633-residue protein sequence, read N- to C-terminus: DNA mismatch repair protein MutL (633 aa).

Belongs to the DNA mismatch repair MutL/HexB family.

In terms of biological role, this protein is involved in the repair of mismatches in DNA. It is required for dam-dependent methyl-directed DNA mismatch repair. May act as a 'molecular matchmaker', a protein that promotes the formation of a stable complex between two or more DNA-binding proteins in an ATP-dependent manner without itself being part of a final effector complex. In Pseudomonas fluorescens (strain SBW25), this protein is DNA mismatch repair protein MutL.